Here is an 83-residue protein sequence, read N- to C-terminus: Kunitz-type serine protease inhibitor textilinin-1 (83 aa).

The first 24 residues, 1–24, serve as a signal peptide directing secretion; the sequence is MSSGGLLLLLGLLTLWEVLTPVSS. The BPTI/Kunitz inhibitor domain occupies 31 to 81; sequence CELPADTGPCRVRFPSFYYNPDEKKCLEFIYGGCEGNANNFITKEECESTC. 3 disulfide bridges follow: C31/C81, C40/C64, and C56/C77.

Belongs to the venom Kunitz-type family. In terms of tissue distribution, expressed by the venom gland.

Its subcellular location is the secreted. Its function is as follows. Strongly inhibits plasmin (Ki=0.44 nM) and trypsin (Ki=0.42 nM). Has little effect on plasma (Ki=1870 nM) and tissue (Ki=12900 nM) kallikreins. Its plasmin-inhibiting activity makes it an antifibrinolytic agent. In vivo, reduces blood loss in a mouse tail vein bleeding model. The protein is Kunitz-type serine protease inhibitor textilinin-1 of Pseudonaja textilis textilis (Eastern brown snake).